Reading from the N-terminus, the 1001-residue chain is Translation initiation factor IF-2 (1001 aa).

Residues 56-418 form a disordered region; that stretch reads PDYVHDPNAV…VEAGPPPISR (363 aa). Basic and acidic residues predominate over residues 70 to 84; sequence TEAHEERHEHEEAHE. The segment covering 85-108 has biased composition (low complexity); that stretch reads PAAAPKAAVEPETPVAPAPEAAPA. The span at 109–120 shows a compositional bias: basic and acidic residues; sequence AKEERPAPEEPA. Composition is skewed to pro residues over residues 136 to 170, 180 to 194, 204 to 217, 229 to 252, 305 to 322, and 345 to 357; these read IHPP…PHAP, PARP…PSQT, RPAP…PTTT, QPFP…PPQQ, PAAP…PVPG, and GMPP…PRPQ. Residues 379–410 show a composition bias toward basic and acidic residues; the sequence is SRGRPGDRRPVRQQRERTEEEKILRPQRRHVE. The tr-type G domain maps to 499 to 668; it reads RRAPVVTIMG…LLVADMQDLK (170 aa). A G1 region spans residues 508-515; sequence GHVDHGKT. 508 to 515 provides a ligand contact to GTP; it reads GHVDHGKT. The G2 stretch occupies residues 533 to 537; that stretch reads GITQH. Residues 554-557 are G3; it reads DTPG. GTP-binding positions include 554–558 and 608–611; these read DTPGH and NKID. The interval 608–611 is G4; the sequence is NKID. The tract at residues 644–646 is G5; sequence SAR.

It belongs to the TRAFAC class translation factor GTPase superfamily. Classic translation factor GTPase family. IF-2 subfamily.

It is found in the cytoplasm. Functionally, one of the essential components for the initiation of protein synthesis. Protects formylmethionyl-tRNA from spontaneous hydrolysis and promotes its binding to the 30S ribosomal subunits. Also involved in the hydrolysis of GTP during the formation of the 70S ribosomal complex. This is Translation initiation factor IF-2 from Solibacter usitatus (strain Ellin6076).